A 582-amino-acid chain; its full sequence is 15-cis-phytoene desaturase, chloroplastic/chromoplastic (582 aa).

The transit peptide at 1-110 directs the protein to the chloroplast and chromoplast; that stretch reads MPQIGLVSAV…FRSSPRPTKP (110 aa). Residues 140–141, Lys-148, 165–166, and Tyr-171 each bind FAD; these read EA and HI. Residue Arg-306 coordinates substrate. 2 residues coordinate FAD: Ile-348 and Asp-537. Ala-545 is a binding site for substrate. Met-547 lines the FAD pocket.

This sequence belongs to the carotenoid/retinoid oxidoreductase family. As to quaternary structure, homotetramer. It depends on FAD as a cofactor.

It is found in the plastid. The protein resides in the chloroplast. It localises to the chromoplast. Its subcellular location is the membrane. The enzyme catalyses 2 a plastoquinone + 15-cis-phytoene = 9,9',15-tri-cis-zeta-carotene + 2 a plastoquinol. The protein operates within carotenoid biosynthesis; lycopene biosynthesis. Inhibited by the herbicides metflurazon, difunone, fluridone and diflufenican. In terms of biological role, converts phytoene into zeta-carotene via the intermediary of phytofluene by the symmetrical introduction of two double bonds at the C-11 and C-11' positions of phytoene with a concomitant isomerization of two neighboring double bonds at the C9 and C9' positions from trans to cis. This chain is 15-cis-phytoene desaturase, chloroplastic/chromoplastic (PDS), found in Capsicum annuum (Capsicum pepper).